A 248-amino-acid polypeptide reads, in one-letter code: ATP synthase subunit a, chloroplastic (248 aa).

5 helical membrane passes run 38 to 58 (QVLI…AIAV), 96 to 116 (VPFI…GALL), 135 to 155 (INTT…AGLT), 200 to 220 (LVVV…VMFL), and 221 to 241 (GLFT…AYIG).

This sequence belongs to the ATPase A chain family. As to quaternary structure, F-type ATPases have 2 components, CF(1) - the catalytic core - and CF(0) - the membrane proton channel. CF(1) has five subunits: alpha(3), beta(3), gamma(1), delta(1), epsilon(1). CF(0) has four main subunits: a, b, b' and c.

It is found in the plastid. The protein localises to the chloroplast thylakoid membrane. Its function is as follows. Key component of the proton channel; it plays a direct role in the translocation of protons across the membrane. The chain is ATP synthase subunit a, chloroplastic from Nuphar advena (Common spatterdock).